Consider the following 517-residue polypeptide: FAD-dependent monooxygenase FUP4 (517 aa).

Residues 1–19 form the signal peptide; sequence MRQSSTLTWTSVLLAPLAA. The 172-residue stretch at 75-246 folds into the FAD-binding PCMH-type domain; that stretch reads QALRPACLVH…TRFDLDLYDQ (172 aa). Histidine 112 is modified (pros-8alpha-FAD histidine). 3 N-linked (GlcNAc...) asparagine glycosylation sites follow: asparagine 163, asparagine 208, and asparagine 346.

Belongs to the oxygen-dependent FAD-linked oxidoreductase family. FAD is required as a cofactor.

It participates in secondary metabolite biosynthesis; terpenoid biosynthesis. FAD-dependent monooxygenase; part of the gene cluster that mediates the biosynthesis of the mycotoxin fusaproliferin (FUP) that belongs to the class of bicyclic sesterterpenoids. FUP4 catalyzes the oxidation of the hydroxy group at the C-16 position of preterpestacin III to a keto group, leading to the formation of (-)-terpestacin. The product of FUP1, preterpestacin I, might also serve as a substrate of FUP4 to yield oxo-preterpestacin I. The FUP biosynthetic pathway starts with the enzyme encoded by FUP1 that combines a C-terminal prenyltransferase domain responsible for the synthesis of geranylgeranyl diphosphate with the N-terminal terpene cyclase domain, to yield preterpestacin I. Preterpestacin I is then decorated by oxygenation steps that are catalyzed by two cytochrome P450 monooxygenases. First, FUP2 introduces a hydroxyl group at the C-24 position resulting in the formation of preterpestacin IIa. The second P450 monooxygenase catalyzes the hydroxylation at C-16 and C-17 of preterpestacin IIa, producing preterpestacin III. Subsequently, the FAD-dependent oxidoreductase FUP4 catalyzes the oxidation of the hydroxy group at the C-16 position to a keto group, leading to the formation of (-)-terpestacin, which is the immediate precursor of FUP. The final step in the proposed biosynthetic pathway is the addition of an acetyl group at the C-24 position of terpestacin, which is catalyzed by the acetyltransferase FUP5. The polypeptide is FAD-dependent monooxygenase FUP4 (Fusarium proliferatum (strain ET1) (Orchid endophyte fungus)).